A 37-amino-acid polypeptide reads, in one-letter code: Cytochrome b6-f complex subunit 5 (37 aa).

Residues 5–25 (LLSGIVLGLIPITLAGLFVTA) traverse the membrane as a helical segment.

Belongs to the PetG family. As to quaternary structure, the 4 large subunits of the cytochrome b6-f complex are cytochrome b6, subunit IV (17 kDa polypeptide, PetD), cytochrome f and the Rieske protein, while the 4 small subunits are PetG, PetL, PetM and PetN. The complex functions as a dimer.

It localises to the plastid. The protein localises to the chloroplast thylakoid membrane. Its function is as follows. Component of the cytochrome b6-f complex, which mediates electron transfer between photosystem II (PSII) and photosystem I (PSI), cyclic electron flow around PSI, and state transitions. PetG is required for either the stability or assembly of the cytochrome b6-f complex. In Zygnema circumcarinatum (Green alga), this protein is Cytochrome b6-f complex subunit 5.